We begin with the raw amino-acid sequence, 417 residues long: NADH-quinone oxidoreductase subunit D (417 aa).

Belongs to the complex I 49 kDa subunit family. In terms of assembly, NDH-1 is composed of 14 different subunits. Subunits NuoB, C, D, E, F, and G constitute the peripheral sector of the complex.

Its subcellular location is the cell inner membrane. It catalyses the reaction a quinone + NADH + 5 H(+)(in) = a quinol + NAD(+) + 4 H(+)(out). Its function is as follows. NDH-1 shuttles electrons from NADH, via FMN and iron-sulfur (Fe-S) centers, to quinones in the respiratory chain. The immediate electron acceptor for the enzyme in this species is believed to be ubiquinone. Couples the redox reaction to proton translocation (for every two electrons transferred, four hydrogen ions are translocated across the cytoplasmic membrane), and thus conserves the redox energy in a proton gradient. In Methylibium petroleiphilum (strain ATCC BAA-1232 / LMG 22953 / PM1), this protein is NADH-quinone oxidoreductase subunit D.